Consider the following 45-residue polypeptide: Photosystem II reaction center protein K (45 aa).

The propeptide occupies 1–8 (MEAALLLA). A helical membrane pass occupies residues 24 to 44 (LPVIPVFFLLLAFVWQAAVGF).

It belongs to the PsbK family. PSII is composed of 1 copy each of membrane proteins PsbA, PsbB, PsbC, PsbD, PsbE, PsbF, PsbH, PsbI, PsbJ, PsbK, PsbL, PsbM, PsbT, PsbX, PsbY, PsbZ, Psb30/Ycf12, peripheral proteins PsbO, CyanoQ (PsbQ), PsbU, PsbV and a large number of cofactors. It forms dimeric complexes.

The protein localises to the cellular thylakoid membrane. One of the components of the core complex of photosystem II (PSII). PSII is a light-driven water:plastoquinone oxidoreductase that uses light energy to abstract electrons from H(2)O, generating O(2) and a proton gradient subsequently used for ATP formation. It consists of a core antenna complex that captures photons, and an electron transfer chain that converts photonic excitation into a charge separation. In Synechococcus elongatus (strain ATCC 33912 / PCC 7942 / FACHB-805) (Anacystis nidulans R2), this protein is Photosystem II reaction center protein K.